The chain runs to 499 residues: MVRSGKNGDLHLKQIAYYKRTGEYHPTTLPSERSGIRRAAKKFVFKEKKKVLRECHENDTGAHHGISRTLTLVESSYYWTSVTNDVKQWVYACQHCQVAKNTVILAPKQHLLKVENPWSIVTVDLMGPFHTSNRSHVYAIIMTDLFTKWVVILPLCDVSASEISKAIINIFFLYGPPQKIIMDQRDEFIHQINVELCELFGTKQIVISHASQTINPAESTPSTIKTFLSKHCVDYPNDWDDHLPAVSFAFNVTHLEPTKNTPYFQMFNRNPYMPESSDIREVDGDNTSMFAKILDAIKEADKIMENKTTSVGQMENNNCHELNKSKIIVKKKPKQQNPFHLKVGHEVLRQRKNWWKDGRFRSEWVGPCVIDYITENGGAVLRDSSGARLKRPIKMSHLKPYVRESGEQDSLHLLHGSVVADHDYVGMPELPVGAYQASILVEDAAIGVDDSELLTSSKDRELLEYRNAKISPLMEDHNALEKQTFSLLDSSNQVLEYLT.

Positions 113–270 (KVENPWSIVT…TPYFQMFNRN (158 aa)) constitute an Integrase catalytic domain.

This Bos taurus (Bovine) protein is Gypsy retrotransposon integrase-like protein 1 (GIN1).